Here is a 669-residue protein sequence, read N- to C-terminus: UvrABC system protein B (669 aa).

Positions 26–414 (EGLEDGLAHQ…SGDVVEQVVR (389 aa)) constitute a Helicase ATP-binding domain. Position 39–46 (39–46 (GVTGSGKT)) interacts with ATP. The Beta-hairpin motif lies at 92–115 (YYDYYQPEAYVPSSDTFIEKDASV). Positions 431–597 (QVDDLLSEIR…GLNKKINDIL (167 aa)) constitute a Helicase C-terminal domain. Positions 629-664 (ESKIRELEAKMYQHAQDLEFEQAASVRDQVQALREQ) constitute a UVR domain.

Belongs to the UvrB family. In terms of assembly, forms a heterotetramer with UvrA during the search for lesions. Interacts with UvrC in an incision complex.

The protein resides in the cytoplasm. Its function is as follows. The UvrABC repair system catalyzes the recognition and processing of DNA lesions. A damage recognition complex composed of 2 UvrA and 2 UvrB subunits scans DNA for abnormalities. Upon binding of the UvrA(2)B(2) complex to a putative damaged site, the DNA wraps around one UvrB monomer. DNA wrap is dependent on ATP binding by UvrB and probably causes local melting of the DNA helix, facilitating insertion of UvrB beta-hairpin between the DNA strands. Then UvrB probes one DNA strand for the presence of a lesion. If a lesion is found the UvrA subunits dissociate and the UvrB-DNA preincision complex is formed. This complex is subsequently bound by UvrC and the second UvrB is released. If no lesion is found, the DNA wraps around the other UvrB subunit that will check the other stand for damage. The chain is UvrABC system protein B from Photorhabdus laumondii subsp. laumondii (strain DSM 15139 / CIP 105565 / TT01) (Photorhabdus luminescens subsp. laumondii).